Reading from the N-terminus, the 397-residue chain is MLTCIACSKQLAGGAPPLREQSDDADDAAVARGAGECATPSTRQAIKALTAQIKDMALKASGAYRHCKPCAGSSSSSPAAGARRHHPYHAYADSGSDRFHYAYRRAGSGGDATPSVSARTDFLAGDEEEEEEEEEEEGTTADGSEDDEAKEWVAQVEPGVLITFLSLPEGGNDLKRIRFSREIFNKWQAQRWWAENYEKVMELYNVQRFNQQTPLPTTPKSEDESLKEDIPATPPLNSERLPHTLHRSLTGGRTTGYGQPDSLGHQHNLGNGHRQQHHHCYTGHQCYGSVGLASTPKLSSISGAKTETSSMDASMRSSSSPEEVDRSRELSVSVSNASDQEREWVEEDEPGVYITIRALPGGIRELRRVRFSREKFSEMHARLWWEENRARIHDQYL.

Disordered stretches follow at residues G14–C37 and R105–E148. A compositionally biased stretch (acidic residues) spans A124–E148. Positions K150–N205 constitute a BRX 1 domain. Disordered stretches follow at residues Q212 to H278 and S300 to R342. Basic and acidic residues predominate over residues K220 to I230. Over residues S309–S320 the composition is skewed to low complexity. Residues R342–L397 form the BRX 2 domain.

It belongs to the BRX family.

It localises to the nucleus. This Oryza sativa subsp. japonica (Rice) protein is Protein Brevis radix-like 1 (BRXL1).